The chain runs to 185 residues: Serine/arginine-rich splicing factor RSZ21A (185 aa).

Residues 2-73 (ARVYVGNLDP…WRVELSRNAS (72 aa)) form the RRM domain. A CCHC-type zinc finger spans residues 87-104 (SKCYECGETGHFARECRL). Residues 109 to 185 (GGLGSGRRRS…YDNGYRRSRS (77 aa)) form a disordered region. Basic residues predominate over residues 114-131 (GRRRSRSRSRSRSPRYRR). Composition is skewed to low complexity over residues 132-145 (SPSY…PAGR) and 152-163 (VSPARARSYSRS).

This sequence belongs to the splicing factor SR family. Post-translationally, extensively phosphorylated on serine residues in the RS domain. As to expression, expressed in roots, leaves and immature seeds.

Its subcellular location is the nucleus. In terms of biological role, involved in pre-mRNA splicing. The polypeptide is Serine/arginine-rich splicing factor RSZ21A (RSZ21A) (Oryza sativa subsp. japonica (Rice)).